Here is a 456-residue protein sequence, read N- to C-terminus: Anthranilate synthase component 1 (456 aa).

L-tryptophan is bound by residues Ser31 and 244 to 246 (SYM). 279–280 (GT) is a binding site for chorismate. Glu306 provides a ligand contact to Mg(2+). Chorismate contacts are provided by residues Tyr394, Arg414, 428-430 (GAG), and Gly430. Glu443 serves as a coordination point for Mg(2+).

The protein belongs to the anthranilate synthase component I family. Heterotetramer consisting of two non-identical subunits: a beta subunit (TrpG) and a large alpha subunit (TrpE). The cofactor is Mg(2+).

The catalysed reaction is chorismate + L-glutamine = anthranilate + pyruvate + L-glutamate + H(+). It participates in amino-acid biosynthesis; L-tryptophan biosynthesis; L-tryptophan from chorismate: step 1/5. Its activity is regulated as follows. Feedback inhibited by tryptophan. Part of a heterotetrameric complex that catalyzes the two-step biosynthesis of anthranilate, an intermediate in the biosynthesis of L-tryptophan. In the first step, the glutamine-binding beta subunit (TrpG) of anthranilate synthase (AS) provides the glutamine amidotransferase activity which generates ammonia as a substrate that, along with chorismate, is used in the second step, catalyzed by the large alpha subunit of AS (TrpE) to produce anthranilate. In the absence of TrpG, TrpE can synthesize anthranilate directly from chorismate and high concentrations of ammonia. The polypeptide is Anthranilate synthase component 1 (trpE) (Lactococcus lactis subsp. lactis (strain IL1403) (Streptococcus lactis)).